A 314-amino-acid polypeptide reads, in one-letter code: MSFASEIKKELTAIETEECCQLAELAALVRMNGAISISRQGYSLDVQTENAAIARRIYTLIKDNYSIAVELLVRKKMKLKKNNVYIVRLKEEVQLLLEELDLIINQYTIVRTISNKYLEKDCCKKSYLRGAFLAGGSMNNPETSSYHLEIFNYYEEHAESLQKLLNSYGLHARLLARKNGFIVYMKEAEKITEFLSIIGAHKALFKFEDVRIVRDMRNSVNRLVNCETANLNKTIGAAFRQIENIKLIERTVGLDQLPDKLQEIAKLRIQYEDVSLKELGELVTSGAISKSGVNHRLKKIDEFAEKIKRGESIT.

The H-T-H motif DNA-binding region spans 275-309; it reads SLKELGELVTSGAISKSGVNHRLKKIDEFAEKIKR.

The protein belongs to the WhiA family.

In terms of biological role, involved in cell division and chromosome segregation. This Oceanobacillus iheyensis (strain DSM 14371 / CIP 107618 / JCM 11309 / KCTC 3954 / HTE831) protein is Probable cell division protein WhiA.